Reading from the N-terminus, the 336-residue chain is Uridine nucleosidase 1 (336 aa).

Residues Asp-29 and His-260 contribute to the active site.

It belongs to the IUNH family. As to quaternary structure, homodimer. Component of the NSH heterocomplex made of URH1/NSH1 and URH2/NSH2 which exhibits strong xanthosine nucleosidase activity. Interacts with URH2. Expressed ubiquitously in leaves, flowers, stems, pollen cells, root tip meristem and root vasculature.

It localises to the cytoplasm. It carries out the reaction uridine + H2O = D-ribose + uracil. The catalysed reaction is xanthosine + H2O = D-ribose + xanthine. It catalyses the reaction inosine + H2O = hypoxanthine + D-ribose. The enzyme catalyses adenosine + H2O = D-ribose + adenine. In terms of biological role, involved in purine and pyrimidine breakdown rather than in pyrimidine salvage, especially in response to dark stress. Together with URH2, required for efficient inosine and xanthosine hydrolytic activities. Unable to use cytidine as a substrate. Can use uridine, inosine, adenosine as well as the cytokinin derivative isopentenyladenine-riboside as substrates. Also hydrolyzes xanthosine with high efficiency. The chain is Uridine nucleosidase 1 from Arabidopsis thaliana (Mouse-ear cress).